The sequence spans 330 residues: 2-methyl-6-phytyl-1,4-hydroquinone methyltransferase 1, chloroplastic (330 aa).

Residues 1–45 constitute a chloroplast transit peptide; it reads MKEMVSSSTFRAPGGLGFLGPSKIGLIPLRNRSGVRSRVKYIAPK. Residues 46–295 are Chloroplast intermembrane-facing; that stretch reads CAVSSARPAS…DVEKPVNPFT (250 aa). The segment at 107-116 is SAM motif I; it reads VVDVGGGTGF. The segment at 152-165 is SAM motif II; it reads VNIIEGDAEDLPYP. The segment at 193 to 206 is SAM motif III; sequence RVLKLGGVACLIGP. A helical membrane pass occupies residues 296-316; the sequence is FIFRFVMGTICASYYVLVPIY. Over 317-330 the chain is Stromal; the sequence is MWMKDQIVPKDQPI.

This sequence belongs to the class I-like SAM-binding methyltransferase superfamily. MPBQ/MBSQ MT family.

It localises to the plastid. The protein resides in the chloroplast inner membrane. It carries out the reaction 2-methyl-6-phytyl-1,4-benzene-1,4-diol + S-adenosyl-L-methionine = 2,3-dimethyl-6-phytylbenzene-1,4-diol + S-adenosyl-L-homocysteine + H(+). The catalysed reaction is 2-methyl-6-(all-trans-nonaprenyl)benzene-1,4-diol + S-adenosyl-L-methionine = plastoquinol-9 + S-adenosyl-L-homocysteine + H(+). It catalyses the reaction 6-geranylgeranyl-2-methylbenzene-1,4-diol + S-adenosyl-L-methionine = 6-geranylgeranyl-2,3-dimethylbenzene-1,4-diol + S-adenosyl-L-homocysteine + H(+). It functions in the pathway cofactor biosynthesis; tocopherol biosynthesis. Functionally, involved in a key methylation step in both tocopherols (vitamin E) and plastoquinone synthesis. Catalyzes the conversion of 2-methyl-6-phytyl-1,4-hydroquinone (MPBQ) to 2,3-dimethyl-6-phytyl-1,4-hydroquinone (DMPQ, a substrate for tocopherol cyclase), and 2-methyl-6-solanyl-1,4-benzoquinone (MSBQ) to plastoquinone. This is 2-methyl-6-phytyl-1,4-hydroquinone methyltransferase 1, chloroplastic (ARSM2) from Oryza sativa subsp. japonica (Rice).